The sequence spans 503 residues: MIKKTDLNNNIFQKEKQIRKEKLINMKKNGFSFPNSFKKNTNSIKIHQEYENKTINELKVLNVEVTIAGRMIQRRIMGKASFFTLQDMEGKIQIYTREKEITSDFYNNHFKKWDIGDILGIEGILFKTKTGELSIFSKKLKILTKSLRPLPDKFHGLSNQEKRYRKRYLDLISNNQLFNIFKNRSKIIRFIRNFMIENNFLEVETPMLHNIPGGANARPFITYHNEINEEMYLRIAPELYLKQLIVGGFERIFELNRNFRNEGVSARHNPEFTMMEAYIAYSNYEDMMNFTENLLKNIIKSICGKSEIKYNKYYLNFNIPFKKLTMKESILQFNSNICLSDLKNLQKIKKIANNIGIEIKDNWNIGYIENEIFEKTVEKNLIQPTFITEYPVEVSPLARRNDFNSNVTDRFELFIAGYEIGNGFSELNDSEDQKNRFLNQMKIAEKEKNKDMLYDENYIEALKYGLPPTSGLGIGIDRLIMILTNQISIRDVILFPTLRSFKK.

2 residues coordinate Mg(2+): Glu412 and Glu419.

The protein belongs to the class-II aminoacyl-tRNA synthetase family. In terms of assembly, homodimer. It depends on Mg(2+) as a cofactor.

It is found in the cytoplasm. It carries out the reaction tRNA(Lys) + L-lysine + ATP = L-lysyl-tRNA(Lys) + AMP + diphosphate. The protein is Lysine--tRNA ligase of Buchnera aphidicola subsp. Schizaphis graminum (strain Sg).